We begin with the raw amino-acid sequence, 328 residues long: Beta-agarase C (328 aa).

A signal peptide spans 1–17 (MNLTKMAVFAASLFCLA). Residues 18–67 (CKNDIDTELEKKSIPESEIQKSEEKLPNEEELTPTDPDEETNKEETVTAN) constitute a propeptide that is removed on maturation. Basic and acidic residues predominate over residues 26–45 (LEKKSIPESEIQKSEEKLPN). Residues 26-61 (LEKKSIPESEIQKSEEKLPNEEELTPTDPDEETNKE) form a disordered region. A compositionally biased stretch (acidic residues) spans 46-59 (EEELTPTDPDEETN). The 259-residue stretch at 70–328 (YDFTGNTPPP…WIHTYQLVEE (259 aa)) folds into the GH16 domain. Residues tryptophan 110, 119-129 (KAENSGVSDGK), 133-135 (KAT), glutamate 188, glutamate 193, and arginine 224 contribute to the substrate site. Glutamate 188 functions as the Nucleophile in the catalytic mechanism. The Proton donor role is filled by glutamate 193.

This sequence belongs to the glycosyl hydrolase 16 family.

The protein resides in the secreted. The enzyme catalyses Hydrolysis of (1-&gt;4)-beta-D-galactosidic linkages in agarose, giving the tetramer as the predominant product.. Cleaves the beta-1,4-linkages between beta-D-galactose and alpha-L-3,6-anhydro-galactose residues in agarose. Cleaves agarose in a random manner with retention of the anomeric-bond configuration, producing beta-anomers that give rise progressively to alpha-anomers when mutarotation takes place. This Zobellia galactanivorans (strain DSM 12802 / CCUG 47099 / CIP 106680 / NCIMB 13871 / Dsij) protein is Beta-agarase C (agaC).